The following is a 667-amino-acid chain: Leucine aminopeptidase 2 (667 aa).

A peptide contacts are provided by residues 188–190 and 318–323; these read QCQ and PYGGME. Histidine 347 provides a ligand contact to Zn(2+). Glutamate 348 serves as the catalytic Proton acceptor. Residues histidine 351 and glutamate 370 each contribute to the Zn(2+) site. The active-site Proton donor is tyrosine 436.

The protein belongs to the peptidase M1 family. Zn(2+) is required as a cofactor.

It is found in the cytoplasm. Its subcellular location is the nucleus. It catalyses the reaction an epoxide + H2O = an ethanediol. In terms of biological role, aminopeptidase that preferentially cleaves di- and tripeptides. Also has low epoxide hydrolase activity (in vitro). Can hydrolyze the epoxide leukotriene LTA(4) but it forms preferentially 5,6-dihydroxy-7,9,11,14-eicosatetraenoic acid rather than the cytokine leukotriene B(4) as the product compared to the homologous mammalian enzyme (in vitro). The protein is Leucine aminopeptidase 2 (ara-1) of Neurospora crassa (strain ATCC 24698 / 74-OR23-1A / CBS 708.71 / DSM 1257 / FGSC 987).